Here is a 52-residue protein sequence, read N- to C-terminus: Metchnikowin (52 aa).

Positions 1-24 (MQLNLGAIFLALLGVMATATSVLA) are cleaved as a signal peptide. Residues 25-26 (EP) constitute a propeptide that is removed on maturation. The tract at residues 28–52 (RHQGPIFDTRPSPFNPNQPRPGPIY) is disordered. Residues 40–52 (PFNPNQPRPGPIY) show a composition bias toward pro residues.

In terms of tissue distribution, hemolymph (at protein level). Highest expression in fat body.

The protein localises to the secreted. Potent antifungal and antibacterial activity against Gram-positive bacteria. This is Metchnikowin (Mtk) from Drosophila melanogaster (Fruit fly).